The chain runs to 91 residues: DNA-directed RNA polymerase subunit omega (91 aa).

This sequence belongs to the RNA polymerase subunit omega family. As to quaternary structure, the RNAP catalytic core consists of 2 alpha, 1 beta, 1 beta' and 1 omega subunit. When a sigma factor is associated with the core the holoenzyme is formed, which can initiate transcription. The rRNA transcription and antitermination complex (rrnTAC) consists of RNAP, NusA, NusB, NusE (rpsJ), NusG, SubB, ribosomal protein S4, DNA and precursor rRNA; S4 is more flexible than other subunits.

It carries out the reaction RNA(n) + a ribonucleoside 5'-triphosphate = RNA(n+1) + diphosphate. In terms of biological role, promotes RNA polymerase (RNAP) assembly. Latches the N- and C-terminal regions of the beta' subunit thereby facilitating its interaction with the beta and alpha subunits. Its function is as follows. Part of the processive rRNA transcription and antitermination complex (rrnTAC). The complex forms an RNA-chaperone ring around the RNA exit tunnel of RNAP. It supports rapid transcription and antitermination of rRNA operons, cotranscriptional rRNA folding, and annealing of distal rRNA regions to allow correct ribosome biogenesis. This chain is DNA-directed RNA polymerase subunit omega (rpoZ), found in Escherichia coli (strain K12).